Consider the following 221-residue polypeptide: Serine/arginine-rich splicing factor 2 (221 aa).

An N-acetylserine modification is found at Ser2. At Ser2 the chain carries Phosphoserine. Positions 14–92 (TSLKVDNLTY…RELRVQMARY (79 aa)) constitute an RRM domain. 2 positions are modified to phosphothreonine: Thr22 and Thr25. Ser26 is subject to Phosphoserine. Lys52 bears the N6-acetyllysine mark. The disordered stretch occupies residues 92-221 (YGRPPDSHHS…SPEEEGAVSS (130 aa)). Basic residues-rich tracts occupy residues 117 to 171 (RRSR…RSKS) and 179 to 189 (SRSRSRSRSRS). 7 positions are modified to phosphoserine: Ser189, Ser191, Ser204, Ser206, Ser208, Ser212, and Ser220.

This sequence belongs to the splicing factor SR family. Interacts with CCNL1 and CCNL2. Interacts with SCAF11. Interacts with ZRSR2/U2AF1-RS2. Interacts with CCDC55 (via C-terminus). In vitro, self-associates and binds SRSF1/SFRS1 (ASF/SF2), SNRNP70 and U2AF1 but not U2AF2. Binds SREK1/SFRS12. Interacts with BRDT. Extensively phosphorylated on serine residues in the RS domain. Phosphorylated by SRPK2 and this causes its redistribution from the nuclear speckle to nucleoplasm and controls cell fate decision in response to cisplatin treatment. KAT5/TIP60 inhibits its phosphorylation by preventing SRPK2 nuclear translocation. In terms of processing, acetylation on Lys-52 by KAT5/TIP60 promotes its proteasomal degradation. This effect is counterbalanced by HDAC6, which positively controls SRSF2 protein level by deacetylating it and preventing its proteasomal degradation. Expressed in all the tissues examined; liver, kidney, spleen, heart, lung and brain.

Its subcellular location is the nucleus. The protein resides in the nucleoplasm. It localises to the nucleus speckle. Necessary for the splicing of pre-mRNA. It is required for formation of the earliest ATP-dependent splicing complex and interacts with spliceosomal components bound to both the 5'- and 3'-splice sites during spliceosome assembly. It also is required for ATP-dependent interactions of both U1 and U2 snRNPs with pre-mRNA. Can bind to the myelin basic protein (MBP) gene MB3 regulatory region and increase transcription of the mbp promoter in cells derived from the CNS. The phosphorylated form (by SRPK2) is required for cellular apoptosis in response to cisplatin treatment. This chain is Serine/arginine-rich splicing factor 2 (Srsf2), found in Mus musculus (Mouse).